Reading from the N-terminus, the 218-residue chain is Ras-related protein YPT3 (218 aa).

20–27 (GDSGVGKS) is a GTP binding site. Residues 42–50 (SKSTIGVEF) carry the Effector region motif. GTP is bound by residues 68 to 72 (DTAGQ) and 126 to 129 (NKSD). Residues 186–205 (GDEGATSSAPPKGETINIKD) are disordered. 2 S-geranylgeranyl cysteine lipidation sites follow: C215 and C216.

Belongs to the small GTPase superfamily. Rab family. Its expression is weak in leaves, higher in stems and roots, but highest in petals, stigma and stamens.

It localises to the cell membrane. Protein transport. Probably involved in vesicular traffic. The protein is Ras-related protein YPT3 (YPT3) of Nicotiana plumbaginifolia (Leadwort-leaved tobacco).